A 704-amino-acid chain; its full sequence is Elongation factor G (704 aa).

The tr-type G domain occupies 8 to 291 (DKVRNIGIMA…AVVEYLASPV (284 aa)). Residues 17-24 (AHIDAGKT), 90-94 (DTPGH), and 144-147 (NKMD) each bind GTP.

It belongs to the TRAFAC class translation factor GTPase superfamily. Classic translation factor GTPase family. EF-G/EF-2 subfamily.

Its subcellular location is the cytoplasm. Its function is as follows. Catalyzes the GTP-dependent ribosomal translocation step during translation elongation. During this step, the ribosome changes from the pre-translocational (PRE) to the post-translocational (POST) state as the newly formed A-site-bound peptidyl-tRNA and P-site-bound deacylated tRNA move to the P and E sites, respectively. Catalyzes the coordinated movement of the two tRNA molecules, the mRNA and conformational changes in the ribosome. The protein is Elongation factor G of Chlorobium phaeobacteroides (strain DSM 266 / SMG 266 / 2430).